The primary structure comprises 113 residues: MEWLTGLPRVAGLFVLTALAEIVGCYLPWLVLREGRSLWLLAPTTLALALFAWLLTLHPAAAGRTYAAYGGVYVTVAIAWLWLVDGVRPDRWDALGCALALAGMAVIMLAPRS.

Helical transmembrane passes span 12–32 (GLFV…WLVL), 37–57 (SLWL…LLTL), 67–87 (AAYG…VDGV), and 91–111 (RWDA…MLAP).

Belongs to the UPF0060 family.

It is found in the cell inner membrane. In Chromobacterium violaceum (strain ATCC 12472 / DSM 30191 / JCM 1249 / CCUG 213 / NBRC 12614 / NCIMB 9131 / NCTC 9757 / MK), this protein is UPF0060 membrane protein CV_3485.